Consider the following 156-residue polypeptide: 3-dehydroquinate dehydratase 1 (156 aa).

Tyr32 (proton acceptor) is an active-site residue. Substrate is bound by residues Asn84, His90, and Asp97. His110 functions as the Proton donor in the catalytic mechanism. Substrate-binding positions include Leu111–Ser112 and Arg121.

This sequence belongs to the type-II 3-dehydroquinase family. Homododecamer.

It catalyses the reaction 3-dehydroquinate = 3-dehydroshikimate + H2O. It participates in metabolic intermediate biosynthesis; chorismate biosynthesis; chorismate from D-erythrose 4-phosphate and phosphoenolpyruvate: step 3/7. Functionally, catalyzes a trans-dehydration via an enolate intermediate. This Ralstonia nicotianae (strain ATCC BAA-1114 / GMI1000) (Ralstonia solanacearum) protein is 3-dehydroquinate dehydratase 1 (aroQ1).